The primary structure comprises 205 residues: Large ribosomal subunit protein uL3 (205 aa).

The protein belongs to the universal ribosomal protein uL3 family. Part of the 50S ribosomal subunit. Forms a cluster with proteins L14 and L19.

Its function is as follows. One of the primary rRNA binding proteins, it binds directly near the 3'-end of the 23S rRNA, where it nucleates assembly of the 50S subunit. This Bacteroides fragilis (strain ATCC 25285 / DSM 2151 / CCUG 4856 / JCM 11019 / LMG 10263 / NCTC 9343 / Onslow / VPI 2553 / EN-2) protein is Large ribosomal subunit protein uL3.